The sequence spans 239 residues: tRNA (guanine-N(7)-)-methyltransferase (239 aa).

S-adenosyl-L-methionine contacts are provided by E69, E94, D121, and D144. D144 is a catalytic residue. K148 provides a ligand contact to substrate. The interaction with RNA stretch occupies residues 150-155; the sequence is RHNKRR. Residues D180 and 217–220 each bind substrate; that span reads TKFE.

It belongs to the class I-like SAM-binding methyltransferase superfamily. TrmB family. In terms of assembly, monomer.

The catalysed reaction is guanosine(46) in tRNA + S-adenosyl-L-methionine = N(7)-methylguanosine(46) in tRNA + S-adenosyl-L-homocysteine. Its pathway is tRNA modification; N(7)-methylguanine-tRNA biosynthesis. Functionally, catalyzes the formation of N(7)-methylguanine at position 46 (m7G46) in tRNA. The polypeptide is tRNA (guanine-N(7)-)-methyltransferase (Yersinia pestis (strain Pestoides F)).